A 135-amino-acid chain; its full sequence is Holo-[acyl-carrier-protein] synthase (135 aa).

Residues Asp9 and Glu63 each contribute to the Mg(2+) site.

The protein belongs to the P-Pant transferase superfamily. AcpS family. Requires Mg(2+) as cofactor.

It is found in the cytoplasm. The catalysed reaction is apo-[ACP] + CoA = holo-[ACP] + adenosine 3',5'-bisphosphate + H(+). Functionally, transfers the 4'-phosphopantetheine moiety from coenzyme A to a Ser of acyl-carrier-protein. In Paraburkholderia phymatum (strain DSM 17167 / CIP 108236 / LMG 21445 / STM815) (Burkholderia phymatum), this protein is Holo-[acyl-carrier-protein] synthase.